A 261-amino-acid chain; its full sequence is Large ribosomal subunit protein uL3 (261 aa).

The span at 138 to 148 (SVSHRSHGSTG) shows a compositional bias: low complexity. 2 disordered regions span residues 138-163 (SVSH…KKMA) and 214-261 (ADAP…GDQA). The residue at position 151 (Gln-151) is an N5-methylglutamine. The span at 227–261 (APTPVEAAADEAAPAEEPAVTEAPAAEATEAGDQA) shows a compositional bias: low complexity.

This sequence belongs to the universal ribosomal protein uL3 family. As to quaternary structure, part of the 50S ribosomal subunit. Forms a cluster with proteins L14 and L19. In terms of processing, methylated by PrmB.

Its function is as follows. One of the primary rRNA binding proteins, it binds directly near the 3'-end of the 23S rRNA, where it nucleates assembly of the 50S subunit. This is Large ribosomal subunit protein uL3 from Phenylobacterium zucineum (strain HLK1).